Consider the following 79-residue polypeptide: Cyclotide phyb-A (79 aa).

Residues 1–43 (MVGVNSLRSALYLIVLILFVQLTYFSDARVMDVDLSRAFLPLT) constitute a propeptide that is removed on maturation. Positions 44 to 73 (GIGCGESCVWIPCVSAAIGCSCSNKICYRN) form a cross-link, cyclopeptide (Gly-Asn). Intrachain disulfides connect C47–C63, C51–C65, and C56–C70. A propeptide spanning residues 74–79 (GIIPKK) is cleaved from the precursor.

This is a cyclic peptide. In terms of processing, contains 3 disulfide bonds. As to expression, expressed in midvein, lamina and periphery of leaves (at protein level).

Functionally, probably participates in a plant defense mechanism. The polypeptide is Cyclotide phyb-A (Petunia hybrida (Petunia)).